Reading from the N-terminus, the 145-residue chain is Deoxyuridine 5'-triphosphate nucleotidohydrolase (145 aa).

Substrate is bound by residues arginine 65–glycine 67, asparagine 78, and threonine 82–aspartate 84.

The protein belongs to the dUTPase family. The cofactor is Mg(2+).

It catalyses the reaction dUTP + H2O = dUMP + diphosphate + H(+). It participates in pyrimidine metabolism; dUMP biosynthesis; dUMP from dCTP (dUTP route): step 2/2. This enzyme is involved in nucleotide metabolism: it produces dUMP, the immediate precursor of thymidine nucleotides and it decreases the intracellular concentration of dUTP so that uracil cannot be incorporated into DNA. The protein is Deoxyuridine 5'-triphosphate nucleotidohydrolase of Clostridium tetani (strain Massachusetts / E88).